Here is a 1580-residue protein sequence, read N- to C-terminus: Collagen alpha-1(XVI) chain (1580 aa).

The first 21 residues, 1-21 (MLTSWAPGLWVLGLWATFSHG), serve as a signal peptide directing secretion. Asn47 carries N-linked (GlcNAc...) asparagine glycosylation. The region spanning 50-231 (GFNLIRRLNL…LQQAHIYCDP (182 aa)) is the Laminin G-like domain. The tract at residues 232–374 (ELVLEEGCCE…SPDAPLQCVE (143 aa)) is nonhelical region 10 (NC10). The disordered stretch occupies residues 324 to 547 (RESNVTLGPS…DPAPAWEGLG (224 aa)). An N-linked (GlcNAc...) asparagine glycan is attached at Asn327. The Collagen-like 1 domain occupies 375–424 (GPKGEKGESGDLGPPGLPGPTGQKGQKGEKGDGGLKGLPGKPGRDGRPGE). The segment at 375-509 (GPKGEKGESG…PGTKGEKGDP (135 aa)) is triple-helical region 9 (COL9) with 3 imperfections. The segment covering 449-460 (PGPPGLPGPPGI) has biased composition (pro residues). A compositionally biased stretch (gly residues) spans 486–495 (GKEGPGGKPG). The tract at residues 510–524 (CEVCPTLPEGSQNFV) is nonhelical region 9 (NC9). Residues 525-570 (GLPGKPGPKGEPGDPAPAWEGLGTVGLKGDRGDPGIQGMKGEKGEP) form a triple-helical region 8 (COL8) with 1 imperfection region. The Cell attachment site motif lies at 555-557 (RGD). Residues 571 to 586 (CSSCSSGVGAQHLGPS) form a nonhelical region 8 (NC8) region. Over residues 585 to 598 (PSPGHGLPGLPGTS) the composition is skewed to low complexity. The tract at residues 585 to 935 (PSPGHGLPGL…LPGQPGLTAE (351 aa)) is disordered. The triple-helical region 7 (COL7) with 1 imperfection stretch occupies residues 587 to 640 (PGHGLPGLPGTSGIPGPRGLKGEKGSFGDTGPAGVPGSPGPVGPAGIKGAKGEP). 2 Collagen-like domains span residues 590-643 (GLPG…PCEP) and 676-725 (GLPG…PAGP). Residues 641 to 661 (CEPCTALSELQDGDMRVVHLP) are nonhelical region 7 (NC7). A triple-helical region 6 (COL6) with 1 imperfection region spans residues 662 to 732 (GPAGEKGEPG…AGPKGEKGDG (71 aa)). Positions 683–693 (KAGERGLKGQK) are enriched in basic and acidic residues. Over residues 698–714 (NPGDPGTPGITGQPGIS) the composition is skewed to low complexity. Residues 733-747 (CTACPSLQGALTDVS) are nonhelical region 6 (NC6). Positions 748–870 (GLPGKPGPKG…RGEKGEPGEC (123 aa)) are triple-helical region 5 (COL5) with 3 imperfections. A Collagen-like 4 domain is found at 797–848 (GAEGPQGEPGTQGLPGTQGLPGPRGPPGSAGEKGAQGSPGPKGAIGPMGPPG). Residues 801 to 817 (PQGEPGTQGLPGTQGLP) show a composition bias toward low complexity. The nonhelical region 5 (NC5) stretch occupies residues 871 to 881 (SCPSRGEPIFS). Residues 882 to 933 (GMPGAPGLWMGSSSQPGPQGPPGVPGPPGPPGMPGLQGVPGHNGLPGQPGLT) form a triple-helical region 4 (COL4) with 2 imperfections region. A compositionally biased stretch (pro residues) spans 899–914 (PQGPPGVPGPPGPPGM). A nonhelical region 4 (NC4) region spans residues 934-967 (AELGSLPIEKHLLKSICGDCAQGQTAHPAFLLEK). Residues 968–982 (GEKGDQGIPGVPGFD) form a triple-helical region 3 (COL3) region. A nonhelical region 3 (NC3) region spans residues 983 to 1005 (NCARCFIERERPRAEEARGDNSE). 2 disordered regions span residues 995-1405 (RAEE…LPGS) and 1445-1523 (AAAP…GYGK). The Cell attachment site motif lies at 1000 to 1002 (RGD). Residues 1006–1063 (GEPGCSGSPGLPGPPGMPGQRGEEGPPGMRGSPGPPGPIGLQGERGLTGLTGDKGEPG) form the Collagen-like 5 domain. The interval 1006 to 1409 (GEPGCSGSPG…PGLPGSMGDM (404 aa)) is triple-helical region 2 (COL2) with 2 imperfections. Residues 1098 to 1107 (SGPPGSEGLP) show a composition bias toward low complexity. Pro residues-rich tracts occupy residues 1139-1148 (FPGPPGPPGF) and 1178-1187 (SPGPPGPPGI). The span at 1196 to 1205 (LDGKDGKPGL) shows a compositional bias: basic and acidic residues. The Cell attachment site motif lies at 1206 to 1208 (RGD). Residues 1210 to 1263 (GPAGPPGLMGPPGFKGKTGHPGLPGPKGDCGKPGPPGSSGRPGAEGEPGAMGPQ) form the Collagen-like 6 domain. The segment covering 1247–1263 (SSGRPGAEGEPGAMGPQ) has biased composition (low complexity). Residues 1265 to 1281 (RPGPPGHLGPPGQPGPP) are compositionally biased toward pro residues. 3 consecutive Collagen-like domains span residues 1350-1407 (GQKG…GSMG), 1448-1500 (PGRP…GDIG), and 1504-1552 (AGEN…GKAG). The span at 1362 to 1371 (GMPGGPGKSG) shows a compositional bias: gly residues. Residues 1396-1405 (NPGLPGLPGS) are compositionally biased toward low complexity. Positions 1410–1448 (VNYDDIKRFIRQEIIKLFDERMAYYTSRMQFPMEVAAAP) are nonhelical region 2 (NC2). A triple-helical region 1 (COL1) with 2 imperfections region spans residues 1449-1554 (GRPGPPGKDG…MGQPGKAGHC (106 aa)). The tract at residues 1555 to 1580 (NPSDCFGAMPMEQQYPPMKSMKGPFG) is nonhelical region 1 (NC1).

Belongs to the fibril-associated collagens with interrupted helices (FACIT) family. As to quaternary structure, homotrimer. Interacts with FBN1, fibronectin and integrins ITGA1/ITGB1 and ITGA2/ITGB1. Integrin ITGA1/ITGB1 binds to a unique site within COL16A1 located close to its C-terminal end between collagenous domains COL1-COL3. In terms of processing, prolines at the third position of the tripeptide repeating unit (G-X-Y) are hydroxylated in some or all of the chains. Glycosylated. In terms of tissue distribution, expressed in most tissues examined with highest levels of expression observed in heart. Strongly expressed in cortical and medullar regions of kidney and more weakly expressed in lung. Also detected in the ciliary muscle of the eye, on the serosa layer lining the muscularis externa of intestinal tissue, and in the perimysium membrane lining both the cardiac muscle bundle and the smooth muscle tissue of the small intestine. Strongly stained in particulate or granular structures. Not detected in brain or skeletal muscle.

The protein localises to the secreted. Its subcellular location is the extracellular space. It localises to the extracellular matrix. Involved in mediating cell attachment and inducing integrin-mediated cellular reactions, such as cell spreading and alterations in cell morphology. The sequence is that of Collagen alpha-1(XVI) chain from Mus musculus (Mouse).